The following is a 461-amino-acid chain: Photosystem II CP43 reaction center protein (461 aa).

Residues M1–E2 constitute a propeptide that is removed on maturation. Position 3 is an N-acetylthreonine (T3). A Phosphothreonine modification is found at T3. The next 5 membrane-spanning stretches (helical) occupy residues L57–A81, L122–N143, K166–T188, K243–S263, and W279–A300. E355 provides a ligand contact to [CaMn4O5] cluster. A helical membrane pass occupies residues R435–P459.

This sequence belongs to the PsbB/PsbC family. PsbC subfamily. In terms of assembly, PSII is composed of 1 copy each of membrane proteins PsbA, PsbB, PsbC, PsbD, PsbE, PsbF, PsbH, PsbI, PsbJ, PsbK, PsbL, PsbM, PsbT, PsbX, PsbY, PsbZ, Psb30/Ycf12, at least 3 peripheral proteins of the oxygen-evolving complex and a large number of cofactors. It forms dimeric complexes. It depends on Binds multiple chlorophylls and provides some of the ligands for the Ca-4Mn-5O cluster of the oxygen-evolving complex. It may also provide a ligand for a Cl- that is required for oxygen evolution. PSII binds additional chlorophylls, carotenoids and specific lipids. as a cofactor.

The protein resides in the plastid. It is found in the chloroplast thylakoid membrane. Functionally, one of the components of the core complex of photosystem II (PSII). It binds chlorophyll and helps catalyze the primary light-induced photochemical processes of PSII. PSII is a light-driven water:plastoquinone oxidoreductase, using light energy to abstract electrons from H(2)O, generating O(2) and a proton gradient subsequently used for ATP formation. In Lotus japonicus (Lotus corniculatus var. japonicus), this protein is Photosystem II CP43 reaction center protein.